The following is a 71-amino-acid chain: Beta-defensin 2 (71 aa).

The first 20 residues, 1–20 (MRTLCSLLLICCLLFSYTTP), serve as a signal peptide directing secretion. 3 disulfide bridges follow: cysteine 37–cysteine 66, cysteine 44–cysteine 59, and cysteine 49–cysteine 67.

This sequence belongs to the beta-defensin family. In terms of tissue distribution, kidney, uterus and to a lesser extent in heart.

It localises to the secreted. In terms of biological role, has bactericidal activity. In Mus musculus (Mouse), this protein is Beta-defensin 2 (Defb2).